The primary structure comprises 462 residues: NEDD8-activating enzyme E1 regulatory subunit (462 aa).

This sequence belongs to the ubiquitin-activating E1 family. ULA1 subfamily. Heterodimer of UBA3 and ULA1. The complex binds NEDD8 and UBC12.

The protein operates within protein modification; protein neddylation. Regulatory subunit of the dimeric UBA3-ULA1 E1 enzyme. E1 activates NEDD8/RUB1 by first adenylating its C-terminal glycine residue with ATP, thereafter linking this residue to the side chain of the catalytic cysteine, yielding a NEDD8-UBA3 thioester and free AMP. E1 finally transfers NEDD8 to the catalytic cysteine of UBC12. In Saccharomyces cerevisiae (strain ATCC 204508 / S288c) (Baker's yeast), this protein is NEDD8-activating enzyme E1 regulatory subunit (ULA1).